The sequence spans 308 residues: Homoserine kinase (308 aa).

Pro94–Thr104 provides a ligand contact to ATP.

The protein belongs to the GHMP kinase family. Homoserine kinase subfamily.

The protein resides in the cytoplasm. It carries out the reaction L-homoserine + ATP = O-phospho-L-homoserine + ADP + H(+). It functions in the pathway amino-acid biosynthesis; L-threonine biosynthesis; L-threonine from L-aspartate: step 4/5. Its function is as follows. Catalyzes the ATP-dependent phosphorylation of L-homoserine to L-homoserine phosphate. The protein is Homoserine kinase of Crocosphaera subtropica (strain ATCC 51142 / BH68) (Cyanothece sp. (strain ATCC 51142)).